A 52-amino-acid chain; its full sequence is Ornatin-B (52 aa).

The Cell attachment site motif lies at 42-44 (RGD).

Belongs to the ornatin family.

The protein localises to the secreted. Potent inhibitor of fibrinogen interaction with platelet receptors expressed on glycoprotein IIb-IIIa complex. May prevent blood from clotting during either feeding and/or storage of ingested blood. The polypeptide is Ornatin-B (Placobdella ornata (Turtle leech)).